The sequence spans 909 residues: Protein translocase subunit SecA (909 aa).

ATP is bound by residues Gln-87, 105-109 (GEGKT), and Asp-514. The interval 879–909 (TPVQGGPKVGRNDPCPCGSGKKYKHCHGKLS) is disordered. Residues Cys-893, Cys-895, Cys-904, and His-905 each contribute to the Zn(2+) site. Residues 899–909 (KKYKHCHGKLS) are compositionally biased toward basic residues.

It belongs to the SecA family. In terms of assembly, monomer and homodimer. Part of the essential Sec protein translocation apparatus which comprises SecA, SecYEG and auxiliary proteins SecDF-YajC and YidC. Requires Zn(2+) as cofactor.

The protein localises to the cell inner membrane. It is found in the cytoplasm. It catalyses the reaction ATP + H2O + cellular proteinSide 1 = ADP + phosphate + cellular proteinSide 2.. Part of the Sec protein translocase complex. Interacts with the SecYEG preprotein conducting channel. Has a central role in coupling the hydrolysis of ATP to the transfer of proteins into and across the cell membrane, serving both as a receptor for the preprotein-SecB complex and as an ATP-driven molecular motor driving the stepwise translocation of polypeptide chains across the membrane. This Azoarcus sp. (strain BH72) protein is Protein translocase subunit SecA.